Consider the following 1432-residue polypeptide: Probable ATP-dependent RNA helicase spindle-E (1432 aa).

The 168-residue stretch at Leu124 to Val291 folds into the Helicase ATP-binding domain. Residue Gly137–Thr144 participates in ATP binding. A DEAH box motif is present at residues Asp237–His240. The region spanning Lys337–Glu524 is the Helicase C-terminal domain. Positions Ala936–Gln999 constitute a Tudor domain.

Belongs to the DEAD box helicase family. DEAH subfamily.

It localises to the cytoplasm. The enzyme catalyses ATP + H2O = ADP + phosphate + H(+). Its function is as follows. Probable ATP-binding RNA helicase which plays a central role during spermatogenesis and oogenesis by repressing transposable elements and preventing their mobilization, which is essential for the germline integrity. Acts via the piRNA metabolic process, which mediates the repression of transposable elements during meiosis by forming complexes composed of piRNAs and Piwi and govern the methylation and subsequent repression of transposons. Involved in the repression of LTR retrotransposon copia. Also involved in telomere regulation by repressing specialized telomeric retroelements HeT-A, TAHRE, and TART; Drosophila telomeres being maintained by transposition of specialized telomeric retroelements. Involved in telomeric trans-silencing, a repression mechanism by which a transposon or a transgene inserted in subtelomeric heterochromatin has the capacity to repress in trans in the female germline, a homologous transposon, or transgene located in euchromatin. Involved in the repression of testis-expressed Stellate genes by the homologous Su(Ste) repeats. Required for anteroposterior and dorsoventral axis formation during oogenesis. The sequence is that of Probable ATP-dependent RNA helicase spindle-E (spn-E) from Drosophila erecta (Fruit fly).